Here is a 923-residue protein sequence, read N- to C-terminus: DNA mismatch repair protein MutS (923 aa).

671–678 (GPNMAGKS) contacts ATP.

It belongs to the DNA mismatch repair MutS family.

In terms of biological role, this protein is involved in the repair of mismatches in DNA. It is possible that it carries out the mismatch recognition step. This protein has a weak ATPase activity. The sequence is that of DNA mismatch repair protein MutS from Rhodopseudomonas palustris (strain BisB5).